The following is a 316-amino-acid chain: tRNA dimethylallyltransferase (316 aa).

17 to 24 (GPTASGKT) serves as a coordination point for ATP. Residue 19–24 (TASGKT) coordinates substrate. 4 interaction with substrate tRNA regions span residues 42–45 (DSAL), 166–170 (QRLSR), 247–252 (RCVGYR), and 280–287 (KRQITWLR).

Belongs to the IPP transferase family. As to quaternary structure, monomer. Mg(2+) serves as cofactor.

The enzyme catalyses adenosine(37) in tRNA + dimethylallyl diphosphate = N(6)-dimethylallyladenosine(37) in tRNA + diphosphate. In terms of biological role, catalyzes the transfer of a dimethylallyl group onto the adenine at position 37 in tRNAs that read codons beginning with uridine, leading to the formation of N6-(dimethylallyl)adenosine (i(6)A). In Escherichia fergusonii (strain ATCC 35469 / DSM 13698 / CCUG 18766 / IAM 14443 / JCM 21226 / LMG 7866 / NBRC 102419 / NCTC 12128 / CDC 0568-73), this protein is tRNA dimethylallyltransferase.